Here is a 103-residue protein sequence, read N- to C-terminus: Protein FMC1 homolog (103 aa).

Belongs to the FMC1 family.

The chain is Protein FMC1 homolog from Nematostella vectensis (Starlet sea anemone).